We begin with the raw amino-acid sequence, 640 residues long: Threonine--tRNA ligase (640 aa).

One can recognise a TGS domain in the interval Met-1–Thr-59. The interval Asp-240–Pro-531 is catalytic. Zn(2+) is bound by residues Cys-332, His-383, and His-508.

It belongs to the class-II aminoacyl-tRNA synthetase family. In terms of assembly, homodimer. It depends on Zn(2+) as a cofactor.

It is found in the cytoplasm. The enzyme catalyses tRNA(Thr) + L-threonine + ATP = L-threonyl-tRNA(Thr) + AMP + diphosphate + H(+). Catalyzes the attachment of threonine to tRNA(Thr) in a two-step reaction: L-threonine is first activated by ATP to form Thr-AMP and then transferred to the acceptor end of tRNA(Thr). Also edits incorrectly charged L-seryl-tRNA(Thr). The chain is Threonine--tRNA ligase from Thermotoga petrophila (strain ATCC BAA-488 / DSM 13995 / JCM 10881 / RKU-1).